The primary structure comprises 216 residues: Probable nicotinate-nucleotide adenylyltransferase (216 aa).

It belongs to the NadD family.

The catalysed reaction is nicotinate beta-D-ribonucleotide + ATP + H(+) = deamido-NAD(+) + diphosphate. The protein operates within cofactor biosynthesis; NAD(+) biosynthesis; deamido-NAD(+) from nicotinate D-ribonucleotide: step 1/1. Functionally, catalyzes the reversible adenylation of nicotinate mononucleotide (NaMN) to nicotinic acid adenine dinucleotide (NaAD). The polypeptide is Probable nicotinate-nucleotide adenylyltransferase (Klebsiella pneumoniae (strain 342)).